We begin with the raw amino-acid sequence, 334 residues long: Pre-mRNA leakage protein 39 (334 aa).

As to quaternary structure, interacts with MLP1 and MLP2.

Its subcellular location is the nucleus membrane. Functionally, involved in the nuclear retention of improperly spliced pre-mRNAs. The protein is Pre-mRNA leakage protein 39 (PML39) of Saccharomyces cerevisiae (strain ATCC 204508 / S288c) (Baker's yeast).